The sequence spans 1343 residues: MGYSYSEKKRIRKDFGKRPQVLNVPYLLTIQLDSFDKFIQKDPEGQQGLEAAFRSVFPIVSNNGYTELQYVDYRLEEPEFDVRECQIRGSTYAAGLRVKLRLVSYDKESSSRAVKDIKENEVYMGEIPLMTDNGTFVINGTERVIVSQLHRSPGVFFDSDKGKTHSSGKVLYNARIIPYRGSWLDFEFDPKDNLFARIDRRRKLPATIILRALGYTTEEILNLFFDKITFEIAGDKLLMTLVPERLRGETASFDIEANGKVYVERGRRITARHIKALEKDNISQVVVPSEYILGKVASKDYVDLESGEIICPANGEISLETLAKLAQAGYTTIETLFTNDLDYGPYISETLRVDPTYDKTSALYEIYRMMRPGEPPTPESSEALFNNLFFSAERYDLSTVGRMKFNRSLAFPEGEGAGILSNEDIIAVMRKLIDIRNGRGEVDDIDHLGNRRIRSVGEMAENQFRIGLVRVERAVKERLSLGDLDAITPQDLINPKPISAAVKEFFGSSQLSQFMDQNNPLSEVTHKRRISALGPGGLTRERAGFEVRDVHNTHYGRLCPIETPEGPNIGLINSLSAFARTNDYGFLETPYRKVVDGQVTEEIEYLSVIDEANYIIAQANSNLDENNRFTDAFVTARGERGESGLYKPEDIHYMDVSTQQVVSVAAALIPFLEHDDANRALMGANMQRQAVPTLRADKPLVGTGMEKPIALDSGVAVVAKRGGTVQYVDASRIVIKVNEDETIAGEAGIDIYNLIKYTRSNQNTCINQIPCVNLGDPINRGEVLADGPSTDLGELALGQNIRVAFMPWNGYNFEDSMLVSERVVQQDRFTTIHIQELSCVARDTKLGAEEITADIPNVGESALSKLDESGIVYVGAEVKGGDILVGKVTPKGETQLTPEEKLLRAIFGEKASDVKDSSLRVPNGTSGTVIDVQVFTRDGVEKDKRALEIEEMQLREAKKDLTEELEILEAGLFARVRNLLISSGADAAQLDKVDRTKWLEQTIADEEKQNQLEQLAEQYEELRKEFEHKLEVKRKKIIKGDDLAPGVLKVVKVYLAVKRQIQPGDKMAGRHGNKGVISKINPVEDMPYDENGQPVEIVLNPLGVPSRMNIGQILETHLGLAAKGIGDQINAMLKQKQEVEKLRSYIQKAYDLLGNGSQKVDLSTFTDEEVLRLAGNLRKGLPVATPVFDGADEAEIKELLKLGGLPTSGQITLYDGRTGEKFERPVTVGYMYMLKLNHLVDDKMHARSTGSYSLVTQQPLGGKAQFGGQRFGEMEVWALEAYGAAYTLQEMLTVKSDDVNGRTKMYKNIVSGNQHMEPGTPESFNVIMKEIRSLGLNIELDEE.

Belongs to the RNA polymerase beta chain family. As to quaternary structure, the RNAP catalytic core consists of 2 alpha, 1 beta, 1 beta' and 1 omega subunit. When a sigma factor is associated with the core the holoenzyme is formed, which can initiate transcription.

The catalysed reaction is RNA(n) + a ribonucleoside 5'-triphosphate = RNA(n+1) + diphosphate. Functionally, DNA-dependent RNA polymerase catalyzes the transcription of DNA into RNA using the four ribonucleoside triphosphates as substrates. The protein is DNA-directed RNA polymerase subunit beta of Haemophilus influenzae (strain 86-028NP).